Consider the following 762-residue polypeptide: Cellulose synthase-like protein H2 (762 aa).

Positions 1–15 (MAVVAAAAATGSTTR) are enriched in low complexity. The disordered stretch occupies residues 1 to 39 (MAVVAAAAATGSTTRSGGGGGEGTRSGRKKPPPPPLQER). 2 consecutive transmembrane segments (helical) span residues 47 to 67 (AWAWRLAGLAVLLLLLALLAL) and 81 to 101 (GVWRVALVCEAWFAALCALNV). Catalysis depends on residues aspartate 180 and aspartate 470. 6 consecutive transmembrane segments (helical) span residues 541–561 (LAYLIVLGWPLRAPFELCYGL), 582–602 (FSVPLALFISYNTYNFMEYMA), 619–639 (IISVSAWTLAFLTVLLKSLGL), 673–693 (LPVFIPVTALAMLNIVAVTVG), 708–728 (APGIGEFMCCGWLVLCFFPFV), and 739–759 (GIPWSVKLKASLLVAMFVTFC).

The protein belongs to the glycosyltransferase 2 family. Plant cellulose synthase-like H subfamily.

The protein resides in the golgi apparatus membrane. Functionally, thought to be a Golgi-localized beta-glycan synthase that polymerize the backbones of noncellulosic polysaccharides (hemicelluloses) of plant cell wall. The sequence is that of Cellulose synthase-like protein H2 (CSLH2) from Oryza sativa subsp. japonica (Rice).